A 348-amino-acid chain; its full sequence is Dihydroorotase (348 aa).

Zn(2+) is bound by residues histidine 17 and histidine 19. Substrate-binding positions include histidine 19–arginine 21 and asparagine 45. Residues lysine 103, histidine 140, and histidine 178 each contribute to the Zn(2+) site. Position 103 is an N6-carboxylysine (lysine 103). Histidine 140 contacts substrate. Leucine 223 contributes to the substrate binding site. Position 251 (aspartate 251) interacts with Zn(2+). Aspartate 251 is an active-site residue. Substrate-binding residues include histidine 255 and alanine 267.

Belongs to the metallo-dependent hydrolases superfamily. DHOase family. Class II DHOase subfamily. As to quaternary structure, homodimer. Zn(2+) serves as cofactor.

It catalyses the reaction (S)-dihydroorotate + H2O = N-carbamoyl-L-aspartate + H(+). Its pathway is pyrimidine metabolism; UMP biosynthesis via de novo pathway; (S)-dihydroorotate from bicarbonate: step 3/3. Functionally, catalyzes the reversible cyclization of carbamoyl aspartate to dihydroorotate. In Shigella flexneri serotype 5b (strain 8401), this protein is Dihydroorotase.